The primary structure comprises 165 residues: Lipoprotein signal peptidase (165 aa).

3 consecutive transmembrane segments (helical) span residues 12–32 (WLWV…LILQ), 70–90 (WFFA…MYRS), and 102–122 (ALII…GFVV). Residues D123 and D141 contribute to the active site. Residues 137–157 (FNLADSAICIGAALIVLEGFL) traverse the membrane as a helical segment.

This sequence belongs to the peptidase A8 family.

The protein localises to the cell inner membrane. The enzyme catalyses Release of signal peptides from bacterial membrane prolipoproteins. Hydrolyzes -Xaa-Yaa-Zaa-|-(S,diacylglyceryl)Cys-, in which Xaa is hydrophobic (preferably Leu), and Yaa (Ala or Ser) and Zaa (Gly or Ala) have small, neutral side chains.. It functions in the pathway protein modification; lipoprotein biosynthesis (signal peptide cleavage). Functionally, this protein specifically catalyzes the removal of signal peptides from prolipoproteins. The protein is Lipoprotein signal peptidase of Klebsiella aerogenes (strain ATCC 13048 / DSM 30053 / CCUG 1429 / JCM 1235 / KCTC 2190 / NBRC 13534 / NCIMB 10102 / NCTC 10006 / CDC 819-56) (Enterobacter aerogenes).